The primary structure comprises 856 residues: DNA mismatch repair protein MutS (856 aa).

Residue 618–625 coordinates ATP; the sequence is GPNMGGKS.

The protein belongs to the DNA mismatch repair MutS family.

Functionally, this protein is involved in the repair of mismatches in DNA. It is possible that it carries out the mismatch recognition step. This protein has a weak ATPase activity. This is DNA mismatch repair protein MutS from Shewanella baltica (strain OS185).